A 133-amino-acid chain; its full sequence is Rodlin protein RdlB (133 aa).

The N-terminal stretch at 1–28 (MIKKVVAYAAIAASVMGASAAAAPQAMA) is a signal peptide. 2 amyloid-forming regions span residues 45–57 (QYFG…GNMS) and 59–70 (QMALIQGSFNKP). The interval 45-70 (QYFGNSMTTGNMSPQMALIQGSFNKP) is required for amyloid formation.

Belongs to the rodlin family.

The protein localises to the secreted. The protein resides in the cell wall. It is found in the spore wall. Its function is as follows. Forms part of the rodlet layer on the spore surface; despite their high similarity both RdlA and RdlB are required for rodlet formation. Plays a role in cell adhesion to polystyrene plates. Forms amyloid-like fibrils in vitro composed of stacked beta-sheets. The protein is Rodlin protein RdlB of Streptomyces coelicolor (strain ATCC BAA-471 / A3(2) / M145).